Reading from the N-terminus, the 838-residue chain is DNA gyrase subunit A (838 aa).

N-acetylthreonine is present on Thr2. The Topo IIA-type catalytic domain maps to 41 to 510 (LPEVRDGLKP…ADGDVSDEDL (470 aa)). Tyr129 acts as the O-(5'-phospho-DNA)-tyrosine intermediate in catalysis. Asp504, Ser506, Glu508, and Asp515 together coordinate Ca(2+). The EF-hand domain maps to 504–516 (DVSDEDLIAREDV). The interval 514–838 (EDVVVTITET…DANGADQTGN (325 aa)) is C-terminal domain CTD. The GyrA-box signature appears at 537–543 (QKRGGKG). Residues 743–749 (QGRGGKG) carry the GyrA-box-1 motif.

This sequence belongs to the type II topoisomerase GyrA/ParC subunit family. Heterotetramer, composed of two GyrA and two GyrB chains. In the heterotetramer, GyrA contains the active site tyrosine that forms a transient covalent intermediate with DNA, while GyrB binds cofactors and catalyzes ATP hydrolysis. The cofactor is Ca(2+).

The protein resides in the cytoplasm. The catalysed reaction is ATP-dependent breakage, passage and rejoining of double-stranded DNA.. With respect to regulation, DNA supercoiling inhibited by (fluoro)quinoline antibiotics such as sparfloxacin and levofloxacin, which usually act on GyrA. DNA supercoiling inhibited by the coumarin antibiotic novobiocin which acts on GyrB. Quinolones lead to gyrase-mediated dsDNA cleavage while preventing reclosure. DNA supercoiling activity inhibited by aminopyrazinamide and pyrrolamide derivatives, probably via effects on the GyrB subunit. DNA relaxation inhibited by ATP and its analogs. DNA supercoiling, relaxation, decatenation and quinolone-promoted DNA cleavage are inhibited by MfpA (50% inhibition occurs at 2 uM), inhibition of gyrase activities is enhanced in a concentration-dependent manner by MfpA. In terms of biological role, a type II topoisomerase that negatively supercoils closed circular double-stranded (ds) DNA in an ATP-dependent manner to maintain chromosomes in an underwound state, while in the absence of ATP it relaxes supercoiled dsDNA. Also catalyzes the interconversion of other topological isomers of dsDNA rings, including catenanes. Gyrase from M.tuberculosis has higher decatenation than supercoiling activity compared to E.coli; as M.tuberculosis only has 1 type II topoisomerase, gyrase has to fulfill the decatenation function of topoisomerase IV as well. At comparable concentrations M.tuberculosis gyrase cannot introduce as many negative supercoils into DNA as the E.coli enzyme, and its ATPase activity is lower, perhaps because it does not couple DNA wrapping and ATP binding as well as E.coli. Functionally, negative supercoiling favors strand separation, and DNA replication, transcription, recombination and repair, all of which involve strand separation. Type II topoisomerases break and join 2 DNA strands simultaneously in an ATP-dependent manner. The polypeptide is DNA gyrase subunit A (Mycobacterium tuberculosis (strain ATCC 25618 / H37Rv)).